The primary structure comprises 224 residues: Lipoprotein-releasing system ATP-binding protein LolD (224 aa).

One can recognise an ABC transporter domain in the interval 6–224; that stretch reads VRLRELRRSF…VVRLHEGVLE (219 aa). 42 to 49 lines the ATP pocket; sequence GPSGSGKS.

Belongs to the ABC transporter superfamily. Lipoprotein translocase (TC 3.A.1.125) family. As to quaternary structure, the complex is composed of two ATP-binding proteins (LolD) and two transmembrane proteins (LolC and LolE).

The protein localises to the cell inner membrane. Part of the ABC transporter complex LolCDE involved in the translocation of mature outer membrane-directed lipoproteins, from the inner membrane to the periplasmic chaperone, LolA. Responsible for the formation of the LolA-lipoprotein complex in an ATP-dependent manner. This chain is Lipoprotein-releasing system ATP-binding protein LolD, found in Novosphingobium aromaticivorans (strain ATCC 700278 / DSM 12444 / CCUG 56034 / CIP 105152 / NBRC 16084 / F199).